Consider the following 580-residue polypeptide: Mucolipin-1 (580 aa).

Residues 1 to 38 (MTAPAGPRGSETERLLTPNPGYGTQAGPSPAPPTPPEE) are disordered. Over 1–65 (MTAPAGPRGS…FRAKGRKPCK (65 aa)) the chain is Cytoplasmic. The residue at position 10 (Ser-10) is a Phosphoserine. The Dileucine motif; mediates targeting to lysosomes motif lies at 11–16 (ETERLL). Residues 42 to 62 (RRRLKYFFMSPCDKFRAKGRK) are interaction with phosphoinositides. Residues 66-86 (LMLQVVKILVVTVQLILFGLS) traverse the membrane as a helical segment. The Extracellular portion of the chain corresponds to 87 to 298 (NQLAVTFREE…VFQHGDNSFR (212 aa)). The tract at residues 107-121 (LGYSDGADDTFAAYT) is extracellular/lumenal pore loop. The cysteines at positions 166 and 192 are disulfide-linked. Asn-230 is a glycosylation site (N-linked (GlcNAc...) asparagine). A disulfide bridge links Cys-253 with Cys-284. Residues 299 to 321 (LLFDVVVILTCSLSFLLCARSLL) traverse the membrane as a helical segment. Over 322–350 (RGFLLQNEFVGFMWRQRGRVISLWERLEF) the chain is Cytoplasmic. A helical transmembrane segment spans residues 351–371 (VNGWYILLVTSDVLTISGTIM). The Extracellular segment spans residues 372-382 (KIGIEAKNLAS). Residues 383–405 (YDVCSILLGTSTLLVWVGVIRYL) traverse the membrane as a helical segment. Topologically, residues 406–427 (TFFHNYNILIATLRVALPSVMR) are cytoplasmic. A helical membrane pass occupies residues 428 to 448 (FCCCVAVIYLGYCFCGWIVLG). Residues 449-456 (PYHVKFRS) are Extracellular-facing. An intramembrane region (pore-forming) is located at residues 457–477 (LSMVSECLFSLINGDDMFVTF). The Selectivity filter motif lies at 469-474 (NGDDMF). Residues 478 to 491 (AAMQAQQGRSSLVW) are Extracellular-facing. Residues 492 to 513 (LFSQLYLYSFISLFIYMVLSLF) form a helical membrane-spanning segment. At 514–580 (IALITGAYDT…PSEEHSLLVN (67 aa)) the chain is on the cytoplasmic side. Residues Ser-557 and Ser-559 each carry the phosphoserine; by PAK modification. The tract at residues 565 to 567 (CCC) is required for palmitoylation and association with membranes. A Dileucine internalization motif; mediates AP2 complex-dependent internalization motif is present at residues 573–578 (EEHSLL).

Belongs to the transient receptor (TC 1.A.4) family. Polycystin subfamily. MCOLN1 sub-subfamily. As to quaternary structure, homotetramer. Homooligomer. Can heterooligomerize with MCOLN2 or MCOLN3; heteromeric assemblies have different channel properties as compared to the respective homooligomers and may be tissue-specific. Interacts with PDCD6. Interacts with TMEM163. Interacts with LAPTM4B. In terms of processing, palmitoylated; involved in association with membranes. Phosphorylation by PKA inhibits channel activity. Dephosphorylation increases activity. Post-translationally, proteolytically cleaved probably involving multiple lysosomal proteases including cathepsin B; inhibits lysosomal channel activity. In terms of tissue distribution, widely expressed in adult and fetal tissues.

The protein resides in the late endosome membrane. It is found in the lysosome membrane. The protein localises to the cytoplasmic vesicle membrane. Its subcellular location is the cell projection. It localises to the phagocytic cup. The protein resides in the cytoplasmic vesicle. It is found in the phagosome membrane. The protein localises to the cell membrane. The catalysed reaction is Ca(2+)(in) = Ca(2+)(out). It carries out the reaction Fe(2+)(in) = Fe(2+)(out). The enzyme catalyses Mg(2+)(in) = Mg(2+)(out). It catalyses the reaction K(+)(in) = K(+)(out). The catalysed reaction is Na(+)(in) = Na(+)(out). Its activity is regulated as follows. Channel activity is controlled by multiple regulatory mechanisms in different subcellular compartments. Channel function is transiently modulated by changes in Ca(2+) in a pH-dependent manner; pH changes modify the aggregation state of unitary channels; a negative cooperativity between extracellular/lumenal Ca(2+) and H(+) is suggested. Regulated by phosphoinositides in a compartment-specific manner: in lysosomes activated by PtdIns(3,5)P2 (Phosphatidylinositol 3,5-bisphosphate) and at the plasma membrane inhibited by PtdIns(4,5)P2 (Phosphatidylinositol 4,5-bisphosphate). In terms of biological role, nonselective cation channel probably playing a role in the regulation of membrane trafficking events and of metal homeostasis. Acts as a Ca(2+)-permeable cation channel with inwardly rectifying activity. Proposed to play a major role in Ca(2+) release from late endosome and lysosome vesicles to the cytoplasm, which is important for many lysosome-dependent cellular events, including the fusion and trafficking of these organelles, exocytosis and autophagy. Required for efficient uptake of large particles in macrophages in which Ca(2+) release from the lysosomes triggers lysosomal exocytosis. May also play a role in phagosome-lysosome fusion. Involved in lactosylceramide trafficking indicative for a role in the regulation of late endocytic membrane fusion/fission events. By mediating lysosomal Ca(2+) release is involved in regulation of mTORC1 signaling and in mTOR/TFEB-dependent lysosomal adaptation to environmental cues such as nutrient levels. Seems to act as lysosomal active oxygen species (ROS) sensor involved in ROS-induced TFEB activation and autophagy. Also functions as a Fe(2+) permeable channel in late endosomes and lysosomes. Also permeable to Mg(2+), Na(+). K(+) and Cs(+). Proposed to play a role in zinc homeostasis probably implicating its association with TMEM163 In adaptive immunity, TRPML2 and TRPML1 may play redundant roles in the function of the specialized lysosomes of B cells. Its function is as follows. May contribute to cellular lipase activity within the late endosomal pathway or at the cell surface which may be involved in processes of membrane reshaping and vesiculation, especially the growth of tubular structures. However, it is not known, whether it conveys the enzymatic activity directly, or merely facilitates the activity of an associated phospholipase. The chain is Mucolipin-1 from Homo sapiens (Human).